Consider the following 301-residue polypeptide: MSTDKTYCGFIAIVGRPNVGKSTLLNKLLGQKISITSRKAQTTRHRIVGIHTEGPYQAIYVDTPGLHMEEKRAINRLMNKAASSSIGDVELVIFVVEGTRWTPDDEMVLNKLRDGKAPVILAVNKVDNVQEKADLLPHLQFLANQMNFLDIVPISAETGMNVDTIAGIVRKHLPEAIHHFPEDYITDRSQRFMASEIIREKLMRFLGAELPYSVTVEIERFVTNERGGYDINGLILVEREGQKKMVIGNKGAKIKTIGIEARKDMQEMFEAPVHLELWVKVKSGWADDERALRSLGYVDDL.

An Era-type G domain is found at 7-175 (YCGFIAIVGR…AGIVRKHLPE (169 aa)). The interval 15-22 (GRPNVGKS) is G1. Residue 15–22 (GRPNVGKS) coordinates GTP. Residues 41-45 (QTTRH) form a G2 region. Positions 62 to 65 (DTPG) are G3. GTP contacts are provided by residues 62 to 66 (DTPGL) and 124 to 127 (NKVD). The G4 stretch occupies residues 124–127 (NKVD). The interval 154-156 (ISA) is G5. A KH type-2 domain is found at 206–283 (LGAELPYSVT…HLELWVKVKS (78 aa)).

Belongs to the TRAFAC class TrmE-Era-EngA-EngB-Septin-like GTPase superfamily. Era GTPase family. As to quaternary structure, monomer.

It localises to the cytoplasm. The protein localises to the cell inner membrane. Functionally, an essential GTPase that binds both GDP and GTP, with rapid nucleotide exchange. Plays a role in 16S rRNA processing and 30S ribosomal subunit biogenesis and possibly also in cell cycle regulation and energy metabolism. The polypeptide is GTPase Era (Salmonella paratyphi B (strain ATCC BAA-1250 / SPB7)).